The sequence spans 336 residues: Fructose-1,6-bisphosphatase class 1 (336 aa).

Residues Glu-91, Asp-114, Leu-116, and Asp-117 each contribute to the Mg(2+) site. Residues 117–120, Asn-210, Tyr-243, and Lys-273 each bind substrate; that span reads DGSS. Glu-279 lines the Mg(2+) pocket.

It belongs to the FBPase class 1 family. Homotetramer. Mg(2+) serves as cofactor.

The protein localises to the cytoplasm. The catalysed reaction is beta-D-fructose 1,6-bisphosphate + H2O = beta-D-fructose 6-phosphate + phosphate. Its pathway is carbohydrate biosynthesis; gluconeogenesis. In Dichelobacter nodosus (strain VCS1703A), this protein is Fructose-1,6-bisphosphatase class 1.